An 89-amino-acid chain; its full sequence is Large ribosomal subunit protein bL27 (89 aa).

Positions 1–22 (MAHKKAGGSSRNGRDSESKRLG) are disordered.

It belongs to the bacterial ribosomal protein bL27 family.

This Bartonella tribocorum (strain CIP 105476 / IBS 506) protein is Large ribosomal subunit protein bL27.